Reading from the N-terminus, the 254-residue chain is Hydroxyacylglutathione hydrolase (254 aa).

Zn(2+) contacts are provided by His53, His55, Asp57, His58, His111, Asp128, and His166.

Belongs to the metallo-beta-lactamase superfamily. Glyoxalase II family. In terms of assembly, monomer. Zn(2+) is required as a cofactor.

The enzyme catalyses an S-(2-hydroxyacyl)glutathione + H2O = a 2-hydroxy carboxylate + glutathione + H(+). Its pathway is secondary metabolite metabolism; methylglyoxal degradation; (R)-lactate from methylglyoxal: step 2/2. Thiolesterase that catalyzes the hydrolysis of S-D-lactoyl-glutathione to form glutathione and D-lactic acid. This Aeromonas salmonicida (strain A449) protein is Hydroxyacylglutathione hydrolase.